Reading from the N-terminus, the 371-residue chain is Putative F-box/kelch-repeat protein At3g10510 (371 aa).

In terms of domain architecture, F-box spans Ser13–Leu61. Kelch repeat units follow at residues Asn123 to Val165, Lys178 to Ser229, and Asn257 to Ser305.

In Arabidopsis thaliana (Mouse-ear cress), this protein is Putative F-box/kelch-repeat protein At3g10510.